The following is a 492-amino-acid chain: Signal transduction histidine-protein kinase/phosphatase MprB (492 aa).

Over 1-27 (MAFPPNSWRPTGPLPTSSLSLRWRVMM) the chain is Cytoplasmic. The chain crosses the membrane as a helical span at residues 28–48 (LAMSMVALVVVLMAVAVYAVV). The Extracellular portion of the chain corresponds to 49–165 (SRALYDDLDN…TVQVLRRLGT (117 aa)). Residues 166 to 186 (VLLIVGGIGVAVAAIAGGAVA) form a helical membrane-spanning segment. The HAMP domain maps to 187–239 (RAGLRPVGRLTEAAERVARTDDLRPIPVVGSDELARLTEAFNMMLRALAESRE). The Cytoplasmic portion of the chain corresponds to 187–492 (RAGLRPVGRL…DRGGHTVATE (306 aa)). A Histidine kinase domain is found at 247–467 (DAGHELRTPL…SVHMLLPGQR (221 aa)). A Phosphohistidine; by autocatalysis modification is found at histidine 250. Residues 470–492 (DPGATRSAEGFVDDRGGHTVATE) are disordered.

Requires Mg(2+) as cofactor. Mn(2+) is required as a cofactor. Post-translationally, autophosphorylated.

It localises to the cell membrane. It carries out the reaction ATP + protein L-histidine = ADP + protein N-phospho-L-histidine.. Its function is as follows. Member of the two-component regulatory system MprB/MprA which contributes to maintaining a balance among several systems involved in stress resistance and is required for establishment and maintenance of persistent infection in the host. In response to environmental signals MprB acts both as a membrane-associated protein kinase that undergoes autophosphorylation and subsequently transfers the phosphate to MprA, and a protein phosphatase that dephosphorylates phospho-MprA. The polypeptide is Signal transduction histidine-protein kinase/phosphatase MprB (mprB) (Mycolicibacterium smegmatis (strain ATCC 700084 / mc(2)155) (Mycobacterium smegmatis)).